Here is a 151-residue protein sequence, read N- to C-terminus: Cytochrome c-type biogenesis protein CcmE (151 aa).

At 1-8 (MNPQRKKR) the chain is on the cytoplasmic side. A helical; Signal-anchor for type II membrane protein transmembrane segment spans residues 9-29 (LLLIVGLLVGVGVAVGFALSA). Topologically, residues 30-151 (LQQNINLFYT…QAAAGGETKP (122 aa)) are periplasmic. Residues histidine 124 and tyrosine 128 each contribute to the heme site.

The protein belongs to the CcmE/CycJ family.

It is found in the cell inner membrane. Heme chaperone required for the biogenesis of c-type cytochromes. Transiently binds heme delivered by CcmC and transfers the heme to apo-cytochromes in a process facilitated by CcmF and CcmH. In Pseudomonas putida (strain ATCC 700007 / DSM 6899 / JCM 31910 / BCRC 17059 / LMG 24140 / F1), this protein is Cytochrome c-type biogenesis protein CcmE.